The primary structure comprises 279 residues: Vitamin B12-binding protein (279 aa).

The N-terminal stretch at 1-20 is a signal peptide; sequence MTFRFLCWLTGLLLCTAAYA. Residues 24–276 form the Fe/B12 periplasmic-binding domain; the sequence is RVISLAPHAT…QLAELKLAPS (253 aa). A disulfide bridge links C189 with C265.

Belongs to the BtuF family. As to quaternary structure, the complex is composed of two ATP-binding proteins (BtuD), two transmembrane proteins (BtuC) and a solute-binding protein (BtuF).

Its subcellular location is the periplasm. Part of the ABC transporter complex BtuCDF involved in vitamin B12 import. Binds vitamin B12 and delivers it to the periplasmic surface of BtuC. This Pectobacterium atrosepticum (strain SCRI 1043 / ATCC BAA-672) (Erwinia carotovora subsp. atroseptica) protein is Vitamin B12-binding protein.